The following is a 1822-amino-acid chain: CDK5 regulatory subunit-associated protein 2 (1822 aa).

A CM1 motif; interacts with the gTuRC region spans residues 50-93 (KVSPTRARNMKDFENQITELKKENFNLKLRIYFLEERIQQEFAG). Positions 57-195 (RNMKDFENQI…TEKALRLSLE (139 aa)) are interaction with NCKAP5L. Residues Ser485 and Ser544 each carry the phosphoserine modification. The segment at 1022 to 1046 (FQDNPGEQEGPETTQSAGRDKDMDS) is disordered. At Thr1195 the chain carries Phosphothreonine. The segment at 1201 to 1822 (GKMLESLKQQ…GASSPSRPGS (622 aa)) is interaction with PCNT and AKAP9. Phosphoserine occurs at positions 1243 and 1245. Positions 1350–1391 (YHHLLPESPEPSASHALSDDEMSEKSFLSRDPKPDSDTEKYP) are disordered. Positions 1372-1389 (SEKSFLSRDPKPDSDTEK) are enriched in basic and acidic residues. Ser1497, Ser1592, and Ser1595 each carry phosphoserine. The segment at 1655-1697 (HMLGLIEDYDALYKQISWGQTLLAKMDVQTQEALSPTSHKLGP) is interaction with CDK5R1. The tract at residues 1655–1822 (HMLGLIEDYD…GASSPSRPGS (168 aa)) is required for centrosomal attachment, Golgi targeting and CALM1 interaction. An interaction with PCNT region spans residues 1688 to 1822 (LSPTSHKLGP…GASSPSRPGS (135 aa)). The segment at 1790–1799 (VITHQVLRKA) is required for centrosomal attachment, Golgi localization and CALM1 interaction. Ser1822 is subject to Phosphoserine.

Homodimer. Interacts with CDK5R1 (p35 form). CDK5RAP1, CDK5RAP2 and CDK5RAP3 show competitive binding to CDK5R1. May form a complex with CDK5R1 and CDK5. Interacts with pericentrin/PCNT; the interaction is leading to centrosomal and Golgi localization of CDK5RAP2 and PCNT. Interacts with AKAP9; the interaction targets CDK5RAP2 and AKAP9 to Golgi apparatus. Interacts with TUBG1; the interaction is leading to the centrosomal localization of CDK5RAP2 and TUBG1. Interacts with TUBGCP3. Interacts with CALM1. Interacts with CDC20. Interacts with CEP68; degradation of CEP68 in early mitosis leads to removal of CDK5RAP2 from the centrosome which promotes centriole disengagement and subsequent centriole separation. Interacts with NCKAP5L. Interacts with LGALS3BP; this interaction may connect the pericentrosomal complex to the gamma-tubulin ring complex (gTuRC) to promote microtubule assembly and acetylation. Contrary to human, chimpanzee, bovine and dog orthologous proteins, does not interact with EB1/MAPRE1, possibly due to a divergence at the level of the critical residue 939, which is a proline in MAPRE1-binding orthologs and a leucine in mouse and rat. Interacts with CCDC66. Associates (via CM1 motif) with TUBGCP2 of the gTuRC; the interaction plays a role in gTuRC activation. In terms of processing, phosphorylated in vitro by CDK5. Expressed in testis, thymus, heart and brain.

The protein resides in the cytoplasm. It is found in the cytoskeleton. It localises to the microtubule organizing center. The protein localises to the centrosome. Its subcellular location is the golgi apparatus. Functionally, potential regulator of CDK5 activity via its interaction with CDK5R1. Negative regulator of centriole disengagement (licensing) which maintains centriole engagement and cohesion. Involved in regulation of mitotic spindle orientation. Plays a role in the spindle checkpoint activation by acting as a transcriptional regulator of both BUBR1 and MAD2 promoter. Together with EB1/MAPRE1, may promote microtubule polymerization, bundle formation, growth and dynamics at the plus ends. Regulates centrosomal maturation by recruitment of the gamma-tubulin ring complex (gTuRC) onto centrosomes. Required for the recruitment of AKAP9 to centrosomes. Plays a role in neurogenesis. Contrary to higher mammalian orthologs, including human, chimpanzee, bovine and dog, does not interact with EB1/MAPRE1, therefore its function in the regulation of microtubule dynamics is unclear. In Mus musculus (Mouse), this protein is CDK5 regulatory subunit-associated protein 2 (Cdk5rap2).